A 507-amino-acid chain; its full sequence is MSIVSSGDILKILKERIEGFDSPVKTSSVGDVVAIKDGIALVYGLSGVKFGETVAFSSGVRGVVAGLERDTCSVVVFGEDREIREGDSVQCTGELMTVPAGLSVLGRVVNPLGSPVDGGNAIVADSRLPVEAKAPGIMARQPVCEPLQTGIKTVDMLIPIGRGQRELVIGDRKTGKTAIALDTIINQKKTNDTADAKNRMYCIYVAIGQKNSSIARVVHKLKETGAMDYTIVVAAGASDPVSIQYLAPYAACAMGEFFRDNGMHCLIVYDDLSKHAVAYRQMSLLLRRPPGREAYPGDVFYIHSRLLERAAKLSDDLGGGSLTALPIIETQAGDVSAYIPTNVISITDGQIFLESELFHKGFRPAINVGLSVSRVGSAAQVKSVKKVAGSMKLTLAQYRELEDFARFGSDLDPSSQAMLEKGRRFMELLKQGQYSPLSVEEQVAVVLAGADDCVNGIPVSEISKFERGLLERLRAEHGGLMSSLSADIADDIKGKLLEVIRGFAASF.

170–177 contacts ATP; it reads GDRKTGKT.

Belongs to the ATPase alpha/beta chains family. In terms of assembly, F-type ATPases have 2 components, CF(1) - the catalytic core - and CF(0) - the membrane proton channel. CF(1) has five subunits: alpha(3), beta(3), gamma(1), delta(1), epsilon(1). CF(0) has three main subunits: a(1), b(2) and c(9-12). The alpha and beta chains form an alternating ring which encloses part of the gamma chain. CF(1) is attached to CF(0) by a central stalk formed by the gamma and epsilon chains, while a peripheral stalk is formed by the delta and b chains.

It localises to the cell inner membrane. It catalyses the reaction ATP + H2O + 4 H(+)(in) = ADP + phosphate + 5 H(+)(out). Its function is as follows. Produces ATP from ADP in the presence of a proton gradient across the membrane. The alpha chain is a regulatory subunit. In Anaplasma marginale (strain Florida), this protein is ATP synthase subunit alpha.